Consider the following 586-residue polypeptide: Probable lysosomal cobalamin transporter (586 aa).

The next 9 membrane-spanning stretches (helical) occupy residues 10–30 (IWIA…VTTF), 47–67 (VVSL…IALV), 96–116 (IVYY…IPFA), 147–167 (SGFI…PAAG), 191–211 (ALTF…VLYT), 315–335 (LVGG…MLIT), 378–398 (IIMA…LATV), 420–440 (ILIA…SIAM), and 509–529 (VFGA…LIVL). N-linked (GlcNAc...) asparagine glycosylation is present at Asn-540.

This sequence belongs to the LIMR family. LMBRD1 subfamily.

The protein resides in the lysosome membrane. In terms of biological role, probable lysosomal cobalamin transporter. Required to export cobalamin from lysosomes allowing its conversion to cofactors. This is Probable lysosomal cobalamin transporter from Pyricularia oryzae (strain 70-15 / ATCC MYA-4617 / FGSC 8958) (Rice blast fungus).